Reading from the N-terminus, the 563-residue chain is NAD(P)H-quinone oxidoreductase chain 4 (563 aa).

15 helical membrane passes run 25-45 (FPWLSLSILFPIVGAFLVPFI), 56-76 (WFALGIALVTFVITVAAYLYG), 90-110 (VSWLPDLGLTWAVGADGISMP), 111-131 (LILLTSFITALAVLAAWPVTF), 133-153 (PKLFFFLILAMDGGQIAVFAV), 157-177 (LLFFLAWELELLPVYLLLAIW), 189-209 (FIIYTAGSSLFILLVALAMGF), 230-250 (GFQLLCYAGLLIAFGVKLPIV), 264-284 (TAPVHMLLAGILLKMGGYALM), 298-318 (FAPLLIVLGVVNIIYAALTSF), 335-355 (MGFVLIGIGSFSALGTSGAML), 356-376 (QMISHGLIGASLFFLVGATYD), 397-417 (FALWTVCALASLALPGMSGFV), 438-458 (IVIAGLAAIGVILTPIYLLSM), and 485-505 (VYIISCLLVPIIGIGLYPRLM).

This sequence belongs to the complex I subunit 4 family.

It localises to the cellular thylakoid membrane. It carries out the reaction a plastoquinone + NADH + (n+1) H(+)(in) = a plastoquinol + NAD(+) + n H(+)(out). It catalyses the reaction a plastoquinone + NADPH + (n+1) H(+)(in) = a plastoquinol + NADP(+) + n H(+)(out). NDH-1 shuttles electrons from NAD(P)H, via FMN and iron-sulfur (Fe-S) centers, to quinones in the respiratory chain. The immediate electron acceptor for the enzyme in this species is believed to be plastoquinone. Couples the redox reaction to proton translocation (for every two electrons transferred, four hydrogen ions are translocated across the cytoplasmic membrane), and thus conserves the redox energy in a proton gradient. The chain is NAD(P)H-quinone oxidoreductase chain 4 from Prochlorococcus marinus (strain MIT 9303).